Here is a 537-residue protein sequence, read N- to C-terminus: uncharacterized protein (537 aa).

A run of 6 helical transmembrane segments spans residues 5-25, 40-60, 63-83, 115-135, 149-169, and 197-217; these read IGLGLIHGLMYGIVPVAPWFV, LAVAGTIAGQVTLLALTFFGW, VLWVWYYFEPALIILGTMAVV, GLYYFLMSFGLMFCNPLHLEG, VYLLAFTVSYTAIIFIFWVTL, and VGIVAALFLQFANCTPEALVI.

It localises to the plastid. The protein resides in the chloroplast membrane. This is an uncharacterized protein from Ostreococcus tauri.